The primary structure comprises 103 residues: ATP synthase F(0) complex subunit g, mitochondrial (103 aa).

Ala-2 is subject to N-acetylalanine. N6-acetyllysine occurs at positions 11, 24, and 54.

It belongs to the ATPase g subunit family. In terms of assembly, component of the ATP synthase complex composed at least of ATP5F1A/subunit alpha, ATP5F1B/subunit beta, ATP5MC1/subunit c (homooctomer), MT-ATP6/subunit a, MT-ATP8/subunit 8, ATP5ME/subunit e, ATP5MF/subunit f, ATP5MG/subunit g, ATP5MK/subunit k, ATP5MJ/subunit j, ATP5F1C/subunit gamma, ATP5F1D/subunit delta, ATP5F1E/subunit epsilon, ATP5PF/subunit F6, ATP5PB/subunit b, ATP5PD/subunit d, ATP5PO/subunit OSCP. ATP synthase complex consists of a soluble F(1) head domain (subunits alpha(3) and beta(3)) - the catalytic core - and a membrane F(0) domain - the membrane proton channel (subunits c, a, 8, e, f, g, k and j). These two domains are linked by a central stalk (subunits gamma, delta, and epsilon) rotating inside the F1 region and a stationary peripheral stalk (subunits F6, b, d, and OSCP).

Its subcellular location is the mitochondrion. The protein localises to the mitochondrion inner membrane. Its function is as follows. Subunit g, of the mitochondrial membrane ATP synthase complex (F(1)F(0) ATP synthase or Complex V) that produces ATP from ADP in the presence of a proton gradient across the membrane which is generated by electron transport complexes of the respiratory chain. ATP synthase complex consist of a soluble F(1) head domain - the catalytic core - and a membrane F(1) domain - the membrane proton channel. These two domains are linked by a central stalk rotating inside the F(1) region and a stationary peripheral stalk. During catalysis, ATP synthesis in the catalytic domain of F(1) is coupled via a rotary mechanism of the central stalk subunits to proton translocation. In vivo, can only synthesize ATP although its ATP hydrolase activity can be activated artificially in vitro. Part of the complex F(0) domain. The chain is ATP synthase F(0) complex subunit g, mitochondrial from Rattus norvegicus (Rat).